Here is a 211-residue protein sequence, read N- to C-terminus: Transcription factor E (211 aa).

Residues 10-130 (GNPAIYQYLL…LWLMRMDHMN (121 aa)) form the HTH TFE/IIEalpha-type domain.

Belongs to the TFE family. In terms of assembly, monomer. Interaction with RNA polymerase subunits RpoF and RpoE is necessary for Tfe stimulatory transcription activity. Able to interact with Tbp and RNA polymerase in the absence of DNA promoter. Interacts both with the preinitiation and elongation complexes.

Transcription factor that plays a role in the activation of archaeal genes transcribed by RNA polymerase. Facilitates transcription initiation by enhancing TATA-box recognition by TATA-box-binding protein (Tbp), and transcription factor B (Tfb) and RNA polymerase recruitment. Not absolutely required for transcription in vitro, but particularly important in cases where Tbp or Tfb function is not optimal. It dynamically alters the nucleic acid-binding properties of RNA polymerases by stabilizing the initiation complex and destabilizing elongation complexes. Seems to translocate with the RNA polymerase following initiation and acts by binding to the non template strand of the transcription bubble in elongation complexes. The polypeptide is Transcription factor E (Methanocorpusculum labreanum (strain ATCC 43576 / DSM 4855 / Z)).